We begin with the raw amino-acid sequence, 189 residues long: UPF0301 protein PSPA7_0505 (189 aa).

It belongs to the UPF0301 (AlgH) family.

The chain is UPF0301 protein PSPA7_0505 from Pseudomonas paraeruginosa (strain DSM 24068 / PA7) (Pseudomonas aeruginosa (strain PA7)).